Here is a 33-residue protein sequence, read N- to C-terminus: Pheromone biosynthesis-activating neuropeptide (33 aa).

Positions Leu-1–Leu-33 are disordered. The segment covering Glu-13–Asn-26 has biased composition (basic and acidic residues). Position 33 is a leucine amide (Leu-33).

The protein belongs to the pyrokinin family.

Its subcellular location is the secreted. Its function is as follows. Involved in the control of pheromone production in females. The chain is Pheromone biosynthesis-activating neuropeptide from Lymantria dispar (Gypsy moth).